A 764-amino-acid chain; its full sequence is HEAKTENAVQANMELEFKRNRERFGFLKWGSSAFHNMLVVPPGSGIVHQVNLEYLGRVVFNTNGLLYPDSVVGTDSHTTMIDGLGVAGWGVGGIEAEAAMLGQPMSMVLPGVVGFKLVGKLRNGVTATDLVLTVTQMLRKHGVVGKFVEFYGEGMGELSLADRATIANMSPEYGATMGFFPVDHVTLQYLKLTGRKDETISMIESYLLANKMFVDYSEPQVERVYSSHIELNLSDVEPCISGPKRPHDRVPLKEMKADWHACLDNRVGFKGFAIPKEAQVKVAEFNFHGSPAQLRHGDVVIAAITSCTNTSSSVMLGAALVAKKACELGLEVKPWIKTVLLQALGVVTKYLAKSGLQKYLNQLGFNIVGYGCTTCIGNSGDIDESVASAITGNDIVAAAVLSGNRNFEGRVHPLTRANYLASPPLVVAYALAGTVDIDFESEPIGVGKDGKKVFFRDIWPTSEEVAVVVNSNVLPDMFRATYQAITEGNATWNLLSVPEGTLYSWDPTSTYIHEPPYFKDMSMSPPGPHGVKNAYCLLNFGDSITTDHISPAGSIHKDSPAAKYLLERGVDRRDFNSYGVAVVMMRLWHVHFANIRIVNKLLKGEVGPKTIHIPSREKLSVFDAAMRYKSEGQDTIILAGAEYGIGSSRDWAAKGPMLLGVKAVIAKSFERIHRSNLVGMGIIPLCFKAGEDADSLGLTGHERFTIDLPSNVGEIRPGQDVAVVTDTGKSFSCILRFDTEVELAYFDHGGILQYVIRNLIHSKH.

75 to 77 (DSH) contributes to the substrate binding site. [4Fe-4S] cluster contacts are provided by Cys307, Cys372, and Cys375. Substrate is bound by residues Arg405, Arg410, Arg568, and 648–649 (SR).

This sequence belongs to the aconitase/IPM isomerase family. [4Fe-4S] cluster is required as a cofactor.

The protein localises to the cytoplasm. It catalyses the reaction citrate = D-threo-isocitrate. Its pathway is carbohydrate metabolism; glyoxylate and dicarboxylate metabolism. Its function is as follows. Catalyzes the isomerization of citrate to isocitrate via cis-aconitate. The sequence is that of Aconitate hydratase (ACO) from Cucumis melo var. conomon (Oriental pickling melon).